The chain runs to 261 residues: uncharacterized protein (261 aa).

Positions 20-34 (TMSTPFLESDNSNTQ) are enriched in polar residues. A disordered region spans residues 20-55 (TMSTPFLESDNSNTQSISGRIGSNNNSNSKNSGGIG). Residues 35–51 (SISGRIGSNNNSNSKNS) show a composition bias toward low complexity. 3 helical membrane passes run 113–133 (LFSG…ILLL), 183–200 (LIFW…ILFF), and 204–226 (IISL…MANV).

This sequence belongs to the TVP23 family.

The protein localises to the membrane. This is an uncharacterized protein from Dictyostelium discoideum (Social amoeba).